A 310-amino-acid chain; its full sequence is Tyrosine recombinase XerC (310 aa).

The Core-binding (CB) domain occupies 22 to 103 (SQMLEAIEDF…SVKSFSTWAV (82 aa)). Positions 124 to 304 (NLPRVLGEVQ…SSQRLLEAFR (181 aa)) constitute a Tyr recombinase domain. Active-site residues include R165, K189, H256, R259, and H282. The active-site O-(3'-phospho-DNA)-tyrosine intermediate is the Y291.

Belongs to the 'phage' integrase family. XerC subfamily. In terms of assembly, forms a cyclic heterotetrameric complex composed of two molecules of XerC and two molecules of XerD.

Its subcellular location is the cytoplasm. Functionally, site-specific tyrosine recombinase, which acts by catalyzing the cutting and rejoining of the recombining DNA molecules. The XerC-XerD complex is essential to convert dimers of the bacterial chromosome into monomers to permit their segregation at cell division. It also contributes to the segregational stability of plasmids. In Corynebacterium efficiens (strain DSM 44549 / YS-314 / AJ 12310 / JCM 11189 / NBRC 100395), this protein is Tyrosine recombinase XerC.